We begin with the raw amino-acid sequence, 1916 residues long: Diacylglycerol kinase eta (1916 aa).

Residues Met-1–Leu-36 form a disordered region. The span at Arg-19–Leu-36 shows a compositional bias: low complexity. The 94-residue stretch at Ala-82–Thr-175 folds into the PH domain. 2 Phorbol-ester/DAG-type zinc fingers span residues His-195–Cys-245 and Pro-268–Cys-319. One can recognise a DAGKc domain in the interval Gly-350–Lys-486. Residues Asp-623–Leu-644 show a composition bias toward basic and acidic residues. Disordered stretches follow at residues Asp-623–Ala-648, Asp-846–Asn-874, Thr-1018–Pro-1067, and Thr-1183–Pro-1214. The 64-residue stretch at Trp-1853–Asn-1916 folds into the SAM domain.

This sequence belongs to the eukaryotic diacylglycerol kinase family.

It localises to the cytoplasm. The catalysed reaction is a 1,2-diacyl-sn-glycerol + ATP = a 1,2-diacyl-sn-glycero-3-phosphate + ADP + H(+). Functionally, phosphorylates diacylglycerol (DAG) to generate phosphatidic acid (PA). The sequence is that of Diacylglycerol kinase eta from Drosophila ananassae (Fruit fly).